Reading from the N-terminus, the 231-residue chain is UPF0749 protein YlxW (231 aa).

Positions 1–34 (MRGKSAVLLSLIMLIAGFLISFSFQMTKENNKSA) are cleaved as a signal peptide. Positions 44–94 (YALRDELLKQEKENKKFEKELYQKQNKVRQAENKLKKEKSEYYNVLEDTEK) form a coiled coil.

It belongs to the UPF0749 family.

Its function is as follows. May be involved in cell division and sporulation. This Bacillus subtilis (strain 168) protein is UPF0749 protein YlxW (ylxW).